The chain runs to 220 residues: Cell division protein SepF (220 aa).

The disordered stretch occupies residues 33–82; the sequence is GAARGYARRPREDRFEEEGYIDRAGREYDDRPAPREYDEPPIYRGGYDEP. Residues 52–70 show a composition bias toward basic and acidic residues; the sequence is YIDRAGREYDDRPAPREYD.

This sequence belongs to the SepF family. Homodimer. Interacts with FtsZ.

The protein localises to the cytoplasm. Cell division protein that is part of the divisome complex and is recruited early to the Z-ring. Probably stimulates Z-ring formation, perhaps through the cross-linking of FtsZ protofilaments. Its function overlaps with FtsA. This Mycobacterium sp. (strain JLS) protein is Cell division protein SepF.